The sequence spans 404 residues: uncharacterized protein (404 aa).

11 consecutive transmembrane segments (helical) span residues isoleucine 9–serine 29, glycine 36–leucine 56, leucine 76–cysteine 96, isoleucine 103–isoleucine 123, phenylalanine 135–tyrosine 155, lysine 162–tyrosine 182, alanine 199–isoleucine 219, leucine 236–isoleucine 256, isoleucine 288–leucine 308, isoleucine 319–leucine 339, and leucine 366–leucine 386.

The protein belongs to the polysaccharide synthase family. HI_0867/HI_1700 subfamily.

The protein localises to the cell membrane. This is an uncharacterized protein from Haemophilus influenzae (strain ATCC 51907 / DSM 11121 / KW20 / Rd).